We begin with the raw amino-acid sequence, 86 residues long: Large ribosomal subunit protein bL31 (86 aa).

Positions 65-86 (YGMGSANSATSKEQKEEKDSKK) are disordered. The span at 76–86 (KEQKEEKDSKK) shows a compositional bias: basic and acidic residues.

This sequence belongs to the bacterial ribosomal protein bL31 family. Type A subfamily. As to quaternary structure, part of the 50S ribosomal subunit.

Functionally, binds the 23S rRNA. The chain is Large ribosomal subunit protein bL31 from Prochlorococcus marinus (strain AS9601).